The sequence spans 86 residues: Beta-toxin CsEI (86 aa).

A signal peptide spans 1–19 (MNSLLMITACLVLIGTVWA). In terms of domain architecture, LCN-type CS-alpha/beta spans 20 to 84 (KDGYLVEKTG…TWPLPNKTCG (65 aa)). Cystine bridges form between C30–C83, C34–C59, C43–C64, and C47–C66. The residue at position 83 (C83) is a Cysteine amide.

This sequence belongs to the long (4 C-C) scorpion toxin superfamily. Sodium channel inhibitor family. Beta subfamily. Expressed by the venom gland.

It is found in the secreted. In terms of biological role, beta toxins bind voltage-independently at site-4 of sodium channels (Nav) and shift the voltage of activation toward more negative potentials thereby affecting sodium channel activation and promoting spontaneous and repetitive firing. Affects channels from chicken and frog. This Centruroides sculpturatus (Arizona bark scorpion) protein is Beta-toxin CsEI.